Reading from the N-terminus, the 315-residue chain is Protein rlx (315 aa).

The disordered stretch occupies residues 263–315 (TEQLKQRRVERAQETKQAHSKISSRDTRESENQRERAKGNNIRIERGDEGLSR).

In terms of biological role, this protein is probably required for relaxation complex formation and plasmid mobilization by conjugative plasmids. This is Protein rlx (rlx) from Staphylococcus aureus.